Reading from the N-terminus, the 153-residue chain is Adenosine 5'-monophosphoramidase HINT3 (153 aa).

Residues 20–130 (IFCRIANKQE…PASQLGFLSR (111 aa)) enclose the HIT domain. AMP contacts are provided by residues 46 to 47 (DI) and 115 to 117 (HLH). A Histidine triad motif motif is present at residues 113-117 (HLHLH). The active-site Tele-AMP-histidine intermediate is the H115.

It belongs to the HINT family. Forms dimers to octamers and even larger oligomer.

Its subcellular location is the cytoplasm. The protein resides in the nucleus. It carries out the reaction adenosine 5'-phosphoramidate + H2O = AMP + NH4(+). In terms of biological role, exhibits adenosine 5'-monophosphoramidase activity, hydrolyzing purine nucleotide phosphoramidates with a single phosphate group such as adenosine 5'monophosphoramidate (AMP-NH2) to yield AMP and NH2. Hydrolyzes lysyl-AMP (AMP-N-epsilon-(N-alpha-acetyl lysine methyl ester)) generated by lysine tRNA ligase. This is Adenosine 5'-monophosphoramidase HINT3 (hint3) from Xenopus tropicalis (Western clawed frog).